Here is a 186-residue protein sequence, read N- to C-terminus: ATP synthase subunit b, chloroplastic (186 aa).

Residues 27-43 (IFETNILNLAVVLGILL) traverse the membrane as a helical segment.

This sequence belongs to the ATPase B chain family. In terms of assembly, F-type ATPases have 2 components, F(1) - the catalytic core - and F(0) - the membrane proton channel. F(1) has five subunits: alpha(3), beta(3), gamma(1), delta(1), epsilon(1). F(0) has four main subunits: a(1), b(1), b'(1) and c(10-14). The alpha and beta chains form an alternating ring which encloses part of the gamma chain. F(1) is attached to F(0) by a central stalk formed by the gamma and epsilon chains, while a peripheral stalk is formed by the delta, b and b' chains.

The protein resides in the plastid. It localises to the chloroplast thylakoid membrane. In terms of biological role, f(1)F(0) ATP synthase produces ATP from ADP in the presence of a proton or sodium gradient. F-type ATPases consist of two structural domains, F(1) containing the extramembraneous catalytic core and F(0) containing the membrane proton channel, linked together by a central stalk and a peripheral stalk. During catalysis, ATP synthesis in the catalytic domain of F(1) is coupled via a rotary mechanism of the central stalk subunits to proton translocation. Component of the F(0) channel, it forms part of the peripheral stalk, linking F(1) to F(0). This is ATP synthase subunit b, chloroplastic from Mesostigma viride (Green alga).